We begin with the raw amino-acid sequence, 203 residues long: Probable chemoreceptor glutamine deamidase CheD (203 aa).

This sequence belongs to the CheD family.

The enzyme catalyses L-glutaminyl-[protein] + H2O = L-glutamyl-[protein] + NH4(+). In terms of biological role, probably deamidates glutamine residues to glutamate on methyl-accepting chemotaxis receptors (MCPs), playing an important role in chemotaxis. The protein is Probable chemoreceptor glutamine deamidase CheD of Methylobacillus flagellatus (strain ATCC 51484 / DSM 6875 / VKM B-1610 / KT).